The chain runs to 202 residues: Succinate dehydrogenase cytochrome b558 subunit (202 aa).

5 helical membrane-spanning segments follow: residues 12–31 (LHSL…HLVV), 60–79 (IFII…YIAF), 93–113 (NWLF…VSWH), 135–155 (ILSS…TIFH), and 178–196 (ISTY…VGLK). Residues His-28, His-70, His-113, and His-155 each contribute to the heme site.

Belongs to the cytochrome b558 family. Part of an enzyme complex containing three subunits: a flavoprotein, an iron-sulfur protein and cytochrome b-558.

Its subcellular location is the cell membrane. It functions in the pathway carbohydrate metabolism; tricarboxylic acid cycle. Di-heme cytochrome of the succinate dehydrogenase complex. The chain is Succinate dehydrogenase cytochrome b558 subunit (sdhC) from Bacillus subtilis (strain 168).